The primary structure comprises 203 residues: Ribonuclease HII (203 aa).

An RNase H type-2 domain is found at 18-203 (GHYAGVDEVG…SFRPVREALA (186 aa)). Asp-24, Glu-25, and Asp-116 together coordinate a divalent metal cation.

This sequence belongs to the RNase HII family. The cofactor is Mn(2+). It depends on Mg(2+) as a cofactor.

The protein resides in the cytoplasm. It catalyses the reaction Endonucleolytic cleavage to 5'-phosphomonoester.. Endonuclease that specifically degrades the RNA of RNA-DNA hybrids. In Shewanella halifaxensis (strain HAW-EB4), this protein is Ribonuclease HII.